Consider the following 260-residue polypeptide: Ava biosynthesis cluster protein M (260 aa).

The first 15 residues, 1–15 (MKVLVLGLCRTGTSS), serve as a signal peptide directing secretion.

It belongs to the cytochrome P450 family.

It functions in the pathway secondary metabolite biosynthesis. In terms of biological role, part of the cluster that mediates the biosynthesis of a highly modified cyclo-arginine-tryptophan dipeptide (cRW). The first step of the pathway is perfornmed by the arginine-containing cyclodipeptide synthase (RCPDS) avaA that acts as the scaffold-generating enzyme and is responsible for formation of the cyclo-Arg-Trp (cRW) diketopiperazine. AvaB then acts as a multifunctional flavoenzyme that is responsible for generating the cyclo-Arg-formylkynurenine DKP, which can be deformylated by avaC. AvaB then further catalyzes an additional N-oxidation followed by cyclization and dehydration. The next step is an N-acetylation of the guanidine group catalyzed by the arginine N-acetyltransferase avaD. The roles of the additional enzymes identified within the ava cluster still have to be determined. The protein is Ava biosynthesis cluster protein M of Aspergillus versicolor.